We begin with the raw amino-acid sequence, 64 residues long: Large ribosomal subunit protein uL30 (64 aa).

Belongs to the universal ribosomal protein uL30 family. As to quaternary structure, part of the 50S ribosomal subunit.

This Rhodopseudomonas palustris (strain BisB18) protein is Large ribosomal subunit protein uL30.